Consider the following 254-residue polypeptide: MPIVCHQVPVLAGSATLATMGTLILCFGKPASYGKHSESVSSGVPLLPARIAWFLQELPSFVVSVGMLAWQPRSLFGPPGNVLLGLFSAHYFHRTFIYSLLTRGRPLSAVIFLKATAFCIGNGLLQAYYLVYCAEYPEEWYTDMRFSVGVFFFILGMGINIHSDCMLRQLRKPGEVIYRIPQGGLFTYVSGANFLGEIIEWMGYALATWSVPAFAFAFFTLCFLGMQAFYHHRFYLKMFKDYPKSRKALIPFIF.

4 helical membrane passes run 8 to 28, 72 to 92, 146 to 166, and 206 to 226; these read VPVL…LCFG, PRSL…AHYF, FSVG…SDCM, and LATW…FLGM.

The protein belongs to the steroid 5-alpha reductase family.

It localises to the microsome membrane. It is found in the endoplasmic reticulum membrane. It carries out the reaction a 3-oxo-5alpha-steroid + NADP(+) = a 3-oxo-Delta(4)-steroid + NADPH + H(+). The enzyme catalyses 17beta-hydroxy-5alpha-androstan-3-one + NADP(+) = testosterone + NADPH + H(+). The catalysed reaction is 5alpha-pregnane-3,20-dione + NADP(+) = progesterone + NADPH + H(+). Its function is as follows. Converts testosterone (T) into 5-alpha-dihydrotestosterone (DHT) and progesterone or corticosterone into their corresponding 5-alpha-3-oxosteroids. It plays a central role in sexual differentiation and androgen physiology. This is 3-oxo-5-alpha-steroid 4-dehydrogenase 2 (Srd5a2) from Mus musculus (Mouse).